Consider the following 141-residue polypeptide: MNPTSIVLIVIATVAVCLIIMQIYYIYENYDNIKEFNSTHSTLEYSKTINVFSLDRRIYDPNDHIYDVKQKWRCVNYKNNYVSVSVFGFKSNKDKNIKMFTTINDCINYTFSKSTHSDIYNPCILDDGFQNQDCIFLKSVI.

The helical; Signal-anchor for type II membrane protein transmembrane segment at 1-21 (MNPTSIVLIVIATVAVCLIIM) threads the bilayer. The Virion surface segment spans residues 22–141 (QIYYIYENYD…QDCIFLKSVI (120 aa)).

It belongs to the poxviridae A28 protein family. Contains two intramolecular disulfide bonds. They are created by the viral disulfide bond formation pathway, a poxvirus-specific pathway that operates on the cytoplasmic side of the MV membranes.

The protein resides in the virion membrane. Its function is as follows. Envelope protein required for virus entry into host cell and for cell-cell fusion (syncytium formation). This is Envelope protein A28 homolog from Erythrocebus patas (Red guenon).